A 468-amino-acid chain; its full sequence is Siroheme synthase (468 aa).

Positions methionine 1–leucine 203 are precorrin-2 dehydrogenase /sirohydrochlorin ferrochelatase. Residues threonine 22–valine 23 and proline 43–lysine 44 contribute to the NAD(+) site. The residue at position 128 (serine 128) is a Phosphoserine. Residues glycine 216–arginine 468 are uroporphyrinogen-III C-methyltransferase. Position 225 (proline 225) interacts with S-adenosyl-L-methionine. Aspartate 248 functions as the Proton acceptor in the catalytic mechanism. Lysine 270 serves as the catalytic Proton donor. S-adenosyl-L-methionine is bound by residues glycine 301 to aspartate 303, isoleucine 306, threonine 331 to alanine 332, methionine 383, and glycine 412.

The protein in the N-terminal section; belongs to the precorrin-2 dehydrogenase / sirohydrochlorin ferrochelatase family. This sequence in the C-terminal section; belongs to the precorrin methyltransferase family.

The enzyme catalyses uroporphyrinogen III + 2 S-adenosyl-L-methionine = precorrin-2 + 2 S-adenosyl-L-homocysteine + H(+). The catalysed reaction is precorrin-2 + NAD(+) = sirohydrochlorin + NADH + 2 H(+). It carries out the reaction siroheme + 2 H(+) = sirohydrochlorin + Fe(2+). It participates in cofactor biosynthesis; adenosylcobalamin biosynthesis; precorrin-2 from uroporphyrinogen III: step 1/1. It functions in the pathway cofactor biosynthesis; adenosylcobalamin biosynthesis; sirohydrochlorin from precorrin-2: step 1/1. Its pathway is porphyrin-containing compound metabolism; siroheme biosynthesis; precorrin-2 from uroporphyrinogen III: step 1/1. The protein operates within porphyrin-containing compound metabolism; siroheme biosynthesis; siroheme from sirohydrochlorin: step 1/1. It participates in porphyrin-containing compound metabolism; siroheme biosynthesis; sirohydrochlorin from precorrin-2: step 1/1. Functionally, multifunctional enzyme that catalyzes the SAM-dependent methylations of uroporphyrinogen III at position C-2 and C-7 to form precorrin-2 via precorrin-1. Then it catalyzes the NAD-dependent ring dehydrogenation of precorrin-2 to yield sirohydrochlorin. Finally, it catalyzes the ferrochelation of sirohydrochlorin to yield siroheme. The sequence is that of Siroheme synthase from Nitrosococcus oceani (strain ATCC 19707 / BCRC 17464 / JCM 30415 / NCIMB 11848 / C-107).